The chain runs to 506 residues: MTSSRPSGRDSTGWQETVSNTSPKLVNAMEAARAGAAEVGRVGRRFLYRIWDWEPVNNRTINEPVWCLGCSYTLDIKQYGSPLSSSSLSQLTADTPPLDKSQLAATHQHQDFNGVRTTATATCLSDTSMSAAPTGSQLGSFDTVPDSVTSGYDSALAYEEPGQDGGWPPAFLDDFESRIWMTYRTDFALIPRSSDPQASSALSFAMRIKTTFSDLTGFSSDTGWGCMIRSGQSLLANAILIARLGREWRRGTDLDAEKDIIALFADDPRAPYSLHNFVKYGATACGKYPGEWFGPSATARCIQALADEKQSGLRVYSTGDLPDVYEDSFMAVANPDGRGFQPTLILVCTRLGIDKINQVYEEALISTLQLPQSIGIAGGRPSSSHYFVGVQGQRLFYLDPHHPRPALPYREDPRGYTAEELDTCHTRRLRQLHIGDMDPSMLIGFLIKDEDDWDTWKSSVKHVQGKSIISVSPYDPARGQGGGRAEAIDEVETLESDDDGEPALGA.

A disordered region spans residues 1–21 (MTSSRPSGRDSTGWQETVSNT). Catalysis depends on Cys226, which acts as the Nucleophile. Residues Asp399 and His401 contribute to the active site.

Belongs to the peptidase C54 family.

The protein localises to the cytoplasm. It is found in the nucleus. The protein resides in the preautophagosomal structure. The enzyme catalyses [protein]-C-terminal L-amino acid-glycyl-phosphatidylethanolamide + H2O = [protein]-C-terminal L-amino acid-glycine + a 1,2-diacyl-sn-glycero-3-phosphoethanolamine. Cysteine protease that plays a key role in cytoplasm to vacuole transport (Cvt) and autophagy by mediating both proteolytic activation and delipidation of ATG8. Required for selective autophagic degradation of the nucleus (nucleophagy) as well as for mitophagy which contributes to regulate mitochondrial quantity and quality by eliminating the mitochondria to a basal level to fulfill cellular energy requirements and preventing excess ROS production. The protease activity is required for proteolytic activation of ATG8: cleaves the C-terminal amino acid of ATG8 to reveal a C-terminal glycine. ATG8 ubiquitin-like activity requires the exposure of the glycine at the C-terminus for its conjugation to phosphatidylethanolamine (PE) and its insertion to membranes, which is necessary for autophagy. The ATG8-PE conjugate mediates tethering between adjacent membranes and stimulates membrane hemifusion, leading to expansion of the autophagosomal membrane during autophagy. In addition to the protease activity, also catalyzes deconjugation of PE-conjugated forms of ATG8 during macroautophagy: ATG8 delipidation is required to release the protein from membranes, which facilitates multiple events during macroautophagy, and especially for efficient autophagosome biogenesis, the assembly of ATG9-containing tubulovesicular clusters into phagophores/autophagosomes, and for the disassembly of PAS-associated ATG components. ATG8 delipidation by ATG4 also recycles ATG8-PE generated on inappropriate membranes to maintain a reservoir of unlipidated ATG8 that is required for autophagosome formation at the PAS. In Neurospora crassa (strain ATCC 24698 / 74-OR23-1A / CBS 708.71 / DSM 1257 / FGSC 987), this protein is Cysteine protease 1 (cpr-1).